A 126-amino-acid polypeptide reads, in one-letter code: Fluoride-specific ion channel FluC (126 aa).

4 helical membrane passes run 5–25 (IAVI…FALW), 34–54 (WGTL…LAVF), 67–87 (LVIT…GEVV), and 95–115 (FGLA…LTWA). Residues G74 and T77 each contribute to the Na(+) site.

It belongs to the fluoride channel Fluc/FEX (TC 1.A.43) family.

The protein localises to the cell inner membrane. The catalysed reaction is fluoride(in) = fluoride(out). Na(+) is not transported, but it plays an essential structural role and its presence is essential for fluoride channel function. Its function is as follows. Fluoride-specific ion channel. Important for reducing fluoride concentration in the cell, thus reducing its toxicity. The protein is Fluoride-specific ion channel FluC of Paracidovorax citrulli (strain AAC00-1) (Acidovorax citrulli).